The primary structure comprises 348 residues: Tripartite motif-containing protein 16-like protein (348 aa).

Positions 139–337 (YWTSKPEPST…RIVDLGEEPE (199 aa)) constitute a B30.2/SPRY domain.

Belongs to the TRIM/RBCC family.

It localises to the cytoplasm. The sequence is that of Tripartite motif-containing protein 16-like protein (TRIM16L) from Homo sapiens (Human).